The chain runs to 324 residues: DNA repair and recombination protein RadA (324 aa).

Glycine 114–threonine 121 contributes to the ATP binding site.

This sequence belongs to the eukaryotic RecA-like protein family.

Involved in DNA repair and in homologous recombination. Binds and assemble on single-stranded DNA to form a nucleoprotein filament. Hydrolyzes ATP in a ssDNA-dependent manner and promotes DNA strand exchange between homologous DNA molecules. This Sulfurisphaera tokodaii (strain DSM 16993 / JCM 10545 / NBRC 100140 / 7) (Sulfolobus tokodaii) protein is DNA repair and recombination protein RadA.